Consider the following 607-residue polypeptide: Elongation factor 4 (607 aa).

The 183-residue stretch at 11 to 193 (KNIRNFSIIA…KIVETIPAPS (183 aa)) folds into the tr-type G domain. GTP is bound by residues 23-28 (DHGKST) and 140-143 (NKID).

This sequence belongs to the TRAFAC class translation factor GTPase superfamily. Classic translation factor GTPase family. LepA subfamily.

The protein localises to the cell membrane. It catalyses the reaction GTP + H2O = GDP + phosphate + H(+). Its function is as follows. Required for accurate and efficient protein synthesis under certain stress conditions. May act as a fidelity factor of the translation reaction, by catalyzing a one-codon backward translocation of tRNAs on improperly translocated ribosomes. Back-translocation proceeds from a post-translocation (POST) complex to a pre-translocation (PRE) complex, thus giving elongation factor G a second chance to translocate the tRNAs correctly. Binds to ribosomes in a GTP-dependent manner. This Staphylococcus carnosus (strain TM300) protein is Elongation factor 4.